Here is a 991-residue protein sequence, read N- to C-terminus: Polyribonucleotide nucleotidyltransferase 2, mitochondrial (991 aa).

The transit peptide at 1 to 39 (MSSIVNRASSASLPNFLAWRALGFRTICSGRLGFAPSVP) directs the protein to the mitochondrion. Residues 609-667 (PRLATLKYSNDSLRTLIGPMGVLKRKIEVETGARLSIDNGTLTIVAKNQDVMEKAQEQV) enclose the KH domain. Residues 678–746 (GGVYKGTVSS…VRGNIKLSRK (69 aa)) form the S1 motif 1 domain. A disordered region spans residues 813 to 865 (EAEKSSPVNDNDKPRRAATSKPDRKPKSTASKLIATQKEEEALESIAPEETSA). Positions 822-838 (DNDKPRRAATSKPDRKP) are enriched in basic and acidic residues. The S1 motif 2 domain occupies 925–987 (GTEMTATVDH…GVPVMALVDE (63 aa)).

It belongs to the polyribonucleotide nucleotidyltransferase family.

The protein resides in the mitochondrion. It carries out the reaction RNA(n+1) + phosphate = RNA(n) + a ribonucleoside 5'-diphosphate. In terms of biological role, involved in the 3'-end maturation of mitochondrial mRNAs, rRNAs and tRNAs. Functions as a poly(A) mRNA 3'-5' degrading phosphorylase and is required for the degradation of highly expressed transcripts of non-coding regions. This chain is Polyribonucleotide nucleotidyltransferase 2, mitochondrial (PNP2), found in Arabidopsis thaliana (Mouse-ear cress).